A 340-amino-acid chain; its full sequence is Ferrochelatase (340 aa).

Fe cation is bound by residues His-189 and Glu-292.

The protein belongs to the ferrochelatase family.

The protein localises to the cytoplasm. It carries out the reaction heme b + 2 H(+) = protoporphyrin IX + Fe(2+). It functions in the pathway porphyrin-containing compound metabolism; protoheme biosynthesis; protoheme from protoporphyrin-IX: step 1/1. In terms of biological role, catalyzes the ferrous insertion into protoporphyrin IX. In Pseudomonas syringae pv. syringae (strain B728a), this protein is Ferrochelatase.